We begin with the raw amino-acid sequence, 197 residues long: Imidazoleglycerol-phosphate dehydratase (197 aa).

It belongs to the imidazoleglycerol-phosphate dehydratase family.

The protein resides in the cytoplasm. The catalysed reaction is D-erythro-1-(imidazol-4-yl)glycerol 3-phosphate = 3-(imidazol-4-yl)-2-oxopropyl phosphate + H2O. The protein operates within amino-acid biosynthesis; L-histidine biosynthesis; L-histidine from 5-phospho-alpha-D-ribose 1-diphosphate: step 6/9. This chain is Imidazoleglycerol-phosphate dehydratase, found in Chromobacterium violaceum (strain ATCC 12472 / DSM 30191 / JCM 1249 / CCUG 213 / NBRC 12614 / NCIMB 9131 / NCTC 9757 / MK).